Reading from the N-terminus, the 535-residue chain is MTVVCWSSRLLLLLPYLLLCVFGPSASHAGRLLVFPMDGSHWLSMLGVIQQLQQKGHEVVVIAPEASIHIKEGSFYTLRKFPVPFQKENVTATLVELGRTAFNQDSFLLRVVKIYMKVKRDSSMLLAGCSHLLHNAEFMASLEESHFDALLTDPFLPCGSIVAQYLTVPTVYFLNKLPCSLDSEATQCPVPLSYVPKSLSFNSDRMNFLQRVKNVLLAVSENFMCRVVYSPYGSLATEILQKEVTVQDLLSPASIWLMRSDFVKDYPRPIMPNMVFIGGINCLQKKPLSQEFEAYVNASGEHGIVVFSLGSMVSEIPEKKAMEIAEALGRIPQTVLWRYTGTRPSNLAKNTILVKWLPQNDLLGHPKTRAFITHSGSHGIYEGICNGVPMVMMPLFGDQMDNAKRMETRGAGVTLNVLEMTADDLENALKTVINNKSYKENIMRLSSLHKDRPIEPLDLAVFWVEYVMRHKGAPHLRPAAHDLTWYQYHSLDVIGFLLAIVLTVVFIVFKCCAYGCRKCFGGKGRVKKSHKSKTH.

An N-terminal signal peptide occupies residues 1-29 (MTVVCWSSRLLLLLPYLLLCVFGPSASHA). N-linked (GlcNAc...) asparagine glycans are attached at residues N89, N297, and N435. Residues 493–509 (VIGFLLAIVLTVVFIVF) traverse the membrane as a helical segment.

This sequence belongs to the UDP-glycosyltransferase family. In terms of assembly, homodimers. Homooligomer. Interacts with UGT1A3, UGT1A4, UGT1A6, UGT1A7, UGT1A8, UGT1A9 and UGT1A10 to form heterodimers. As to expression, highly expressed in liver and at lower levels in colon, kidney, stomach and intestine.

The protein resides in the endoplasmic reticulum membrane. The catalysed reaction is glucuronate acceptor + UDP-alpha-D-glucuronate = acceptor beta-D-glucuronoside + UDP + H(+). It catalyses the reaction 17beta-estradiol + UDP-alpha-D-glucuronate = 17beta-estradiol 3-O-(beta-D-glucuronate) + UDP + H(+). It carries out the reaction 2-hydroxyestrone + UDP-alpha-D-glucuronate = 2-hydroxyestrone 3-O-(beta-D-glucuronate) + UDP + H(+). The enzyme catalyses 2-hydroxy-17beta-estradiol + UDP-alpha-D-glucuronate = 2-hydroxy-17beta-estradiol 3-O-(beta-D-glucuronate) + UDP + H(+). The catalysed reaction is 2-methoxy-17beta-estradiol + UDP-alpha-D-glucuronate = 2-methoxy-17beta-estradiol 3-O-(beta-D-glucuronate) + UDP + H(+). It catalyses the reaction 17alpha-estradiol + UDP-alpha-D-glucuronate = 17alpha-estradiol 3-O-(beta-D-glucuronate) + UDP + H(+). It carries out the reaction 16beta,17beta-estriol + UDP-alpha-D-glucuronate = 16beta,17beta-estriol 16-O-(beta-D-glucuronate) + UDP + H(+). The enzyme catalyses losartan + UDP-alpha-D-glucuronate = losartan-2-N-beta-D-glucuronide + UDP. The catalysed reaction is prunetin + UDP-alpha-D-glucuronate = prunetin-4'-O-beta-D-glucuronide + UDP. It catalyses the reaction SN-38 + UDP-alpha-D-glucuronate = SN-38 O-beta-D-glucuronide + UDP + H(+). It carries out the reaction (4Z,15Z)-bilirubin IXalpha + UDP-alpha-D-glucuronate = (4Z,15Z)-bilirubin IXalpha C12-beta-D-glucuronoside + UDP. The enzyme catalyses (4Z,15Z)-bilirubin IXalpha + UDP-alpha-D-glucuronate = (4Z,15Z)-bilirubin IXalpha C8-beta-D-glucuronoside + UDP. The catalysed reaction is (4Z,15Z)-bilirubin IXalpha C8-beta-D-glucuronoside + UDP-alpha-D-glucuronate = (4Z,15Z)-bilirubin IXalpha C8,C12-beta-D-bisglucuronoside + UDP. It catalyses the reaction (4Z,15Z)-bilirubin IXalpha C12-beta-D-glucuronoside + UDP-alpha-D-glucuronate = (4Z,15Z)-bilirubin IXalpha C8,C12-beta-D-bisglucuronoside + UDP. It carries out the reaction 8-iso-prostaglandin F2alpha + UDP-alpha-D-glucuronate = 8-iso-prostaglandin F2alpha-glucuronide + UDP + H(+). The enzyme catalyses (5Z,8Z,11Z,14Z)-eicosatetraenoate + UDP-alpha-D-glucuronate = O-[(5Z),(8Z),(11Z),(14Z)-eicosatetraenoyl]-beta-D-glucuronate + UDP. The catalysed reaction is 15-hydroxy-(5Z,8Z,11Z,13E)-eicosatetraenoate + UDP-alpha-D-glucuronate = 15-O-(beta-D-glucuronosyl)-(5Z,8Z,11Z,14Z)-eicosatetraenoate + UDP + H(+). It catalyses the reaction 20-hydroxy-(5Z,8Z,11Z,14Z)-eicosatetraenoate + UDP-alpha-D-glucuronate = 20-O-(beta-D-glucuronosyl)-(5Z,8Z,11Z,14Z)-eicosatetraenoate + UDP + H(+). It carries out the reaction prostaglandin B1 + UDP-alpha-D-glucuronate = 15-O-(beta-D-glucuronosyl)-prostaglandin B1 + UDP + H(+). The enzyme catalyses (E)-ferulate + UDP-alpha-D-glucuronate = (E)-4-O-(beta-D-glucuronosyl)-ferulate + UDP + H(+). The catalysed reaction is (E)-ferulate + UDP-alpha-D-glucuronate = (E)-ferulic acid beta-D-glucuronate ester + UDP. UDP-glucuronosyltransferase (UGT) that catalyzes phase II biotransformation reactions in which lipophilic substrates are conjugated with glucuronic acid to increase the metabolite's water solubility, thereby facilitating excretion into either the urine or bile. Essential for the elimination and detoxification of drugs, xenobiotics and endogenous compounds. Catalyzes the glucuronidation of endogenous estrogen hormones such as estradiol, estrone and estriol. Involved in the glucuronidation of bilirubin, a degradation product occurring in the normal catabolic pathway that breaks down heme in vertebrates. Involved in the glucuronidation of arachidonic acid (AA) and AA-derived eicosanoids including 15-HETE, 20-HETE, PGB1 and F2-isoprostane (8-iso-PGF2alpha). Involved in the glucuronidation of the phytochemical ferulic acid at the phenolic or the carboxylic acid group. Also catalyzes the glucuronidation the isoflavones genistein, daidzein, glycitein, formononetin, biochanin A and prunetin, which are phytoestrogens with anticancer and cardiovascular properties. Involved in the glucuronidation of the AGTR1 angiotensin receptor antagonist losartan, a drug which can inhibit the effect of angiotensin II. Involved in the biotransformation of 7-ethyl-10-hydroxycamptothecin (SN-38), the pharmacologically active metabolite of the anticancer drug irinotecan. The protein is UDP-glucuronosyltransferase 1A1 of Mus musculus (Mouse).